Here is a 359-residue protein sequence, read N- to C-terminus: Probable C-C chemokine receptor type 3 (359 aa).

Topologically, residues 1-38 are extracellular; the sequence is MAFNTDEIKTVVESFETTPYEYEWAPPCEKVRIKELGS. Residues 39–64 form a helical membrane-spanning segment; that stretch reads WLLPPLYSLVFIIGLLGNMMVVLILI. The Cytoplasmic portion of the chain corresponds to 65 to 68; sequence KYRK. The chain crosses the membrane as a helical span at residues 69–95; the sequence is LQIMTNIYLFNLAISDLLFLFTVPFWI. Topologically, residues 96-111 are extracellular; that stretch reads HYVLWNEWGFGHYMCK. Cys-110 and Cys-187 are oxidised to a cystine. The chain crosses the membrane as a helical span at residues 112 to 133; that stretch reads MLSGFYYLALYSEIFFIILLTI. Residues 134-150 are Cytoplasmic-facing; the sequence is DRYLAIVHAVFALRART. Residues 151-175 traverse the membrane as a helical segment; sequence VTFATITSIITWGLAGLAALPEFIF. The Extracellular segment spans residues 176–201; the sequence is HESQDSFGEFSCSPRYPEGEEDSWKR. A helical membrane pass occupies residues 202-227; it reads FHALRMNIFGLALPLLIMVICYSGII. The Cytoplasmic portion of the chain corresponds to 228–243; sequence KTLLRCPNKKKHKAIR. Residues 244 to 268 traverse the membrane as a helical segment; it reads LIFVVMIVFFIFWTPYNLVLLFSAF. At 269–285 the chain is on the extracellular side; that stretch reads HSTFLETSCQQSKHLDL. Residues 286–309 traverse the membrane as a helical segment; that stretch reads AMQVTEVIAYTHCCINPVIYAFVG. Topologically, residues 310-359 are cytoplasmic; that stretch reads ERFRKHLRLFFHRNVAVYLGKYIPFLPGEKMERTSSVSPSTGEQEISVVF.

The protein belongs to the G-protein coupled receptor 1 family. In terms of tissue distribution, detected in skeletal muscle and in trace amounts in leukocytes.

The protein localises to the cell membrane. Its function is as follows. Receptor for C-C type chemokine. Binds and responds to a variety of chemokines, including CCL11, CCL26, CCL7, CCL13, RANTES(CCL5) and CCL15. Subsequently transduces a signal by increasing the intracellular calcium ions level. In addition acts as a possible functional receptor for NARS1. The sequence is that of Probable C-C chemokine receptor type 3 (Ccr3) from Mus musculus (Mouse).